We begin with the raw amino-acid sequence, 610 residues long: Glutamine--fructose-6-phosphate aminotransferase [isomerizing] (610 aa).

Catalysis depends on Cys2, which acts as the Nucleophile; for GATase activity. The Glutamine amidotransferase type-2 domain occupies 2–218 (CGIVGAVAQR…EGDVAEITRR (217 aa)). SIS domains are found at residues 286 to 426 (AAEI…QQGR) and 459 to 600 (LATD…VDQP). Lys605 functions as the For Fru-6P isomerization activity in the catalytic mechanism.

As to quaternary structure, homodimer.

It localises to the cytoplasm. The enzyme catalyses D-fructose 6-phosphate + L-glutamine = D-glucosamine 6-phosphate + L-glutamate. Catalyzes the first step in hexosamine metabolism, converting fructose-6P into glucosamine-6P using glutamine as a nitrogen source. This chain is Glutamine--fructose-6-phosphate aminotransferase [isomerizing], found in Vibrio vulnificus (strain YJ016).